Consider the following 516-residue polypeptide: D-aminopeptidase (516 aa).

Catalysis depends on Ser-61, which acts as the Nucleophile. Catalysis depends on Lys-64, which acts as the Proton donor/acceptor. The segment at 476–486 is important for specificity; it reads RRSMDAPAPGD. Residue Asp-480 participates in substrate binding.

The protein belongs to the peptidase S12 family. Homodimer.

It catalyses the reaction Release of an N-terminal D-amino acid from a peptide, Xaa-|-Yaa-, in which Xaa is preferably D-Ala, D-Ser or D-Thr. D-amino acid amides and methyl esters also are hydrolyzed, as is glycine amide.. With respect to regulation, inhibited by beta-lactam compounds such as 6-aminopenicillic acid, 7-aminocephalosporanic acid, benzylpenicillin and ampicillin. Inhibited by p-chloromercuribenzoate. In terms of biological role, hydrolyzes N-terminal residues in D-amino acid-containing peptides. In Cereibacter sphaeroides (strain KD131 / KCTC 12085) (Rhodobacter sphaeroides), this protein is D-aminopeptidase.